Reading from the N-terminus, the 286-residue chain is ATP synthase gamma chain (286 aa).

The protein belongs to the ATPase gamma chain family. F-type ATPases have 2 components, CF(1) - the catalytic core - and CF(0) - the membrane proton channel. CF(1) has five subunits: alpha(3), beta(3), gamma(1), delta(1), epsilon(1). CF(0) has three main subunits: a, b and c.

Its subcellular location is the cell membrane. Functionally, produces ATP from ADP in the presence of a proton gradient across the membrane. The gamma chain is believed to be important in regulating ATPase activity and the flow of protons through the CF(0) complex. The chain is ATP synthase gamma chain from Malacoplasma penetrans (strain HF-2) (Mycoplasma penetrans).